The primary structure comprises 675 residues: UvrABC system protein B (675 aa).

A Helicase ATP-binding domain is found at 35-192 (QGMRDGLMYQ…ARLVAMQYTR (158 aa)). Residue 48-55 (GVTGSGKT) participates in ATP binding. The short motif at 101–124 (YYDYYQPEAYVPTRDLFIEKDSSI) is the Beta-hairpin element. Residues 439-605 (QVDDLLGEIK…GVNKAVRELI (167 aa)) enclose the Helicase C-terminal domain. Residues 633–668 (AREIRRLEKLMTDHARNLEFEQAAAARDALNALKQR) enclose the UVR domain.

The protein belongs to the UvrB family. As to quaternary structure, forms a heterotetramer with UvrA during the search for lesions. Interacts with UvrC in an incision complex.

It localises to the cytoplasm. Functionally, the UvrABC repair system catalyzes the recognition and processing of DNA lesions. A damage recognition complex composed of 2 UvrA and 2 UvrB subunits scans DNA for abnormalities. Upon binding of the UvrA(2)B(2) complex to a putative damaged site, the DNA wraps around one UvrB monomer. DNA wrap is dependent on ATP binding by UvrB and probably causes local melting of the DNA helix, facilitating insertion of UvrB beta-hairpin between the DNA strands. Then UvrB probes one DNA strand for the presence of a lesion. If a lesion is found the UvrA subunits dissociate and the UvrB-DNA preincision complex is formed. This complex is subsequently bound by UvrC and the second UvrB is released. If no lesion is found, the DNA wraps around the other UvrB subunit that will check the other stand for damage. This is UvrABC system protein B from Bordetella petrii (strain ATCC BAA-461 / DSM 12804 / CCUG 43448).